A 287-amino-acid polypeptide reads, in one-letter code: Probable glucose uptake protein GlcU (287 aa).

The next 9 membrane-spanning stretches (helical) occupy residues 7-29 (LIAL…VGGG), 34-56 (IRGT…FAKF), 58-75 (NPTV…WAFG), 114-136 (WSSM…GVAL), 156-178 (MGIL…IFGV), 183-202 (ALFF…SMNH), 209-228 (TALN…FMFY), 233-255 (VGVA…GGIF), and 267-286 (TGIW…LGNL).

Belongs to the GRP transporter (TC 2.A.7.5) family.

It localises to the cell membrane. Involved in the uptake of glucose. This is Probable glucose uptake protein GlcU (glcU) from Staphylococcus aureus (strain COL).